The following is a 489-amino-acid chain: Homoserine O-acetyltransferase (489 aa).

The AB hydrolase-1 domain maps to 69–438 (LLLCHALSGS…AEGHDGFLLE (370 aa)). Ser-163 (nucleophile) is an active-site residue. Residues 255-329 (ASRHPYPDRL…QTTDSSSLNQ (75 aa)) form a disordered region. A compositionally biased stretch (basic and acidic residues) spans 280 to 290 (EGNRNRRERPC). Low complexity predominate over residues 299–329 (SESALNSPASSVSSLPSLGASQTTDSSSLNQ). Catalysis depends on residues Asp-403 and His-432.

This sequence belongs to the AB hydrolase superfamily. MetX family.

It localises to the cytoplasm. The enzyme catalyses L-homoserine + acetyl-CoA = O-acetyl-L-homoserine + CoA. It functions in the pathway amino-acid biosynthesis; L-methionine biosynthesis via de novo pathway; O-acetyl-L-homoserine from L-homoserine: step 1/1. Commits homoserine to the methionine biosynthesis pathway by catalyzing its O-acetylation. The sequence is that of Homoserine O-acetyltransferase (met6) from Schizosaccharomyces pombe (strain 972 / ATCC 24843) (Fission yeast).